A 284-amino-acid chain; its full sequence is Tropomyosin (284 aa).

A coiled-coil region spans residues 1 to 284; sequence MDAIKKKMLM…DQALNELHNM (284 aa). Disordered regions lie at residues 106-134 and 186-221; these read LNST…ENRQ and AETK…EEAY. Composition is skewed to basic and acidic residues over residues 112-134 and 186-198; these read KLTD…ENRQ and AETK…DELK.

Belongs to the tropomyosin family. As to quaternary structure, homodimer.

Tropomyosin, in association with the troponin complex, plays a central role in the calcium dependent regulation of muscle contraction. The polypeptide is Tropomyosin (TPM) (Branchiostoma belcheri (Amphioxus)).